The sequence spans 48 residues: Large ribosomal subunit protein bL32 (48 aa).

Over residues 1 to 20 (MAVPKRRVSKTRAAKRRTHY) the composition is skewed to basic residues. The tract at residues 1–48 (MAVPKRRVSKTRAAKRRTHYKVSLPMPIKDKDGSYKMPHRANPTTKEY) is disordered.

The protein belongs to the bacterial ribosomal protein bL32 family.

The protein is Large ribosomal subunit protein bL32 (rpmF) of Campylobacter jejuni subsp. jejuni serotype O:2 (strain ATCC 700819 / NCTC 11168).